The chain runs to 2381 residues: Nipped-B-like protein A (2381 aa).

An HEAT 1 repeat occupies 85–124 (SDELEGDVPVLLQLLMSRNPNIFRNKTAPNTPQYPAQAGI). Disordered regions lie at residues 131 to 211 (PPYK…HLQQ), 240 to 289 (HLLQ…DIVG), and 329 to 503 (LAAI…ELPP). Positions 138–158 (GSMQGSPASANYQQASMSHSP) are enriched in polar residues. Basic and acidic residues-rich tracts occupy residues 254–273 (GTKD…KSSE) and 333–355 (ERME…DKDK). Residues 373 to 389 (GTAGSGSGAPGGGGGAN) show a composition bias toward gly residues. Residues 451–473 (VKHEHDHDPEHPHYDDKQPDTPR) are compositionally biased toward basic and acidic residues. Positions 552–565 (KKSVKPVVVLQKLS) match the PxVxL motif motif. The segment covering 570–580 (QRLMRERDSRA) has biased composition (basic and acidic residues). 2 disordered regions span residues 570 to 604 (QRLM…SVLK) and 629 to 708 (RKRS…NEVA). Positions 581 to 592 (SKSGKNRLSSGR) are enriched in polar residues. 2 stretches are compositionally biased toward basic and acidic residues: residues 633–642 (TVNERPKYAE) and 658–694 (KDRD…RYDD). 4 HEAT repeats span residues 1299–1337 (SQSF…VDPS), 1375–1413 (PQLT…EQPN), 1477–1516 (YDWF…HILK), and 1843–1881 (LIHP…KYTG). Disordered stretches follow at residues 2005 to 2095 (IPGR…DLDD) and 2228 to 2271 (LLGG…GDSA). Over residues 2006-2021 (PGRKSRKRRRRRRRPQ) the composition is skewed to basic residues. A compositionally biased stretch (basic and acidic residues) spans 2040–2056 (EEERGAQDEERERHSGD). Residues 2057–2068 (EEYDDDDYEEDE) are compositionally biased toward acidic residues. Residues 2077-2086 (KPTEDIRQSE) show a composition bias toward basic and acidic residues.

Belongs to the SCC2/Nipped-B family.

It is found in the nucleus. Its function is as follows. May play a structural role in chromatin. Involved in sister chromatid cohesion, possibly by facilitating the cohesin complex loading. Transcription factor, which may promote cortical neuron migration during brain development by regulating the transcription of crucial genes in this process. In Danio rerio (Zebrafish), this protein is Nipped-B-like protein A (nipbla).